Here is a 325-residue protein sequence, read N- to C-terminus: Putative gluconeogenesis factor (325 aa).

This sequence belongs to the gluconeogenesis factor family.

The protein resides in the cytoplasm. In terms of biological role, required for morphogenesis under gluconeogenic growth conditions. In Streptococcus pyogenes serotype M3 (strain ATCC BAA-595 / MGAS315), this protein is Putative gluconeogenesis factor.